Here is a 445-residue protein sequence, read N- to C-terminus: Argininosuccinate lyase (445 aa).

It belongs to the lyase 1 family. Argininosuccinate lyase subfamily.

It is found in the cytoplasm. It catalyses the reaction 2-(N(omega)-L-arginino)succinate = fumarate + L-arginine. It functions in the pathway amino-acid biosynthesis; L-arginine biosynthesis; L-arginine from L-ornithine and carbamoyl phosphate: step 3/3. This is Argininosuccinate lyase from Xylella fastidiosa (strain 9a5c).